The sequence spans 1061 residues: MPTSADDSLPLEDSEECDAYIAKFLRPRTHLFSTVKQEKQRRESHDNKYETAVRSKAIMPSQASKVYRKEMFYSTSKCDSRFINNLHTFNTFDGGSGYSEASPHYAMDFVKNKGFADDEMAGHLKSLEVSRKMTENVKWLNDNRNDLKTALRRSNSCPEFPIDRDREKITTLRRNEKRNENAKISNFDASFVPELCCSDDYPSILCSIATAFKTVVSRVNAQSIGSGELKIAKVLCSTEDLFAYVIPKRFNTRDALFAFSNQFRAWLEYKPNVQLYTHYRFINVILYLEEFKHERTEFRRARHVCNLKSRRNHGLFLELDTGMLRVVEITPEKVRFLANSWAHNPSAIVEVRFDGVKNEKDISEEIQAIRNTGRATMISFDREHREHMNGKWPNPRTWSSLGTVVLRRECTHHKDHSKPPLTRLFCEDRDCIGLCSTGDYFKVPIPEEPNPSHDKLVELRARFASERTLGYTDRTPIAAYILPNTDAHQNELIPDFFSRVQFLNGYSGPSGLAIITLNEAMFWVDNGLLKSAESQVDDRSWTVKEYQSVEEVINWLAKILPPKSKVGFDPTLVSYTWHQQALQSMTSDRFELVAIPGNIVDEIWRMRPFQRGDVVKMLDKNTPEIPVHVKIDRLRKSLKPNKCLAAVITSLEDIMWLLNIRGNDLPYNPVTYSYLFITMSDVRLFIDAKRLNDVSKAYFARQSIDVDDYKAASPYIYDWISATKSSFADKKILISPETNYLIGRLIGEDHSMIDPSIMERIKKIKNTDQLKGMRASNLRDSIAIVEFLCKFEKERRDGYTFTEYELAADIEEVKTRNREYIGLKQPTIFSAGEHSSVHAHRPDAQKIVFHYQQFMFQTGSHYTDGATNCARTIWDSYPTEEFMNQYTLVLKGHIRLASASFPKTLTYGSRLDIFARIALWDAGLDYDHETGHSVGHFLNIRDTQIVIGREPYSSNSIIEAGQVMTIEPGYYSEGMYGIRIGNCYETVDVTLSQNDQYFLRFEPLTLIPIQTSIVNKDLLTSEEINWLNKYHFKVFSKIGYILRKENRMEEYDWLFNACQPI.

It belongs to the peptidase M24B family. As to quaternary structure, may interact with pid-2, app-1 and prmt-5.

It localises to the cytoplasm. It is found in the perinuclear region. The protein resides in the P-body. In terms of biological role, together with pid-4, it is involved in gene silencing mediated by a class of 21 nucleotide PIWI-interacting RNAs (piRNAs) that possess a uracil residue at the 5'-end (also called 21U-RNAs) and guide the Piwi protein prg-1 to its DNA targets for silencing. Together with pid-4, it is required for the biogenesis of secondary and tertiary 22G-siRNAs. Specifically, promotes the production of 22G-siRNAs from the 5' end of target mRNAs. Together with pid-4, plays a role in small RNA-directed transgenerational epigenetic inheritance (also called RNAe) over several generations and germline immortality. Together with pid-4, plays a role in the formation of liquid-like condensates in the cytoplasm called Z granules. The chain is Protein pid-5 from Caenorhabditis elegans.